Here is a 541-residue protein sequence, read N- to C-terminus: Phosphoenolpyruvate carboxykinase (ATP) (541 aa).

Residue 243-250 coordinates ATP; sequence GLSGTGKT.

The protein belongs to the phosphoenolpyruvate carboxykinase (ATP) family.

The enzyme catalyses oxaloacetate + ATP = phosphoenolpyruvate + ADP + CO2. It functions in the pathway carbohydrate biosynthesis; gluconeogenesis. In Eremothecium gossypii (strain ATCC 10895 / CBS 109.51 / FGSC 9923 / NRRL Y-1056) (Yeast), this protein is Phosphoenolpyruvate carboxykinase (ATP) (PCK1).